The chain runs to 145 residues: Protein SprT-like (145 aa).

A SprT-like domain is found at Asp-5–Ile-140. Position 64 (His-64) interacts with Zn(2+). The active site involves Glu-65. His-68 lines the Zn(2+) pocket.

It belongs to the SprT family. The cofactor is Zn(2+).

Its subcellular location is the cytoplasm. The sequence is that of Protein SprT-like from Streptococcus equi subsp. equi (strain 4047).